Reading from the N-terminus, the 71-residue chain is Small ribosomal subunit protein bS21 (71 aa).

A disordered region spans residues 48–71; sequence ENATLAKRHAKRNARENARNTRLY. The span at 60 to 71 shows a compositional bias: basic and acidic residues; the sequence is NARENARNTRLY.

Belongs to the bacterial ribosomal protein bS21 family.

In Haemophilus influenzae (strain 86-028NP), this protein is Small ribosomal subunit protein bS21.